Here is a 497-residue protein sequence, read N- to C-terminus: L-asparagine permease (497 aa).

12 helical membrane passes run 34-54 (QVQM…GAGA), 58-78 (MAGP…FFIL), 109-129 (VAGW…ITAV), 146-166 (VFAL…VKWF), 171-191 (FWFA…GTIF), 219-239 (LLPA…IELV), 264-284 (IGLF…WNAY), 298-318 (LGVP…ALSS), 353-373 (YAGI…NYLV), 378-398 (FEIV…FIMV), 422-442 (APFT…LMAF), and 448-468 (TYTI…WFGV).

The protein belongs to the amino acid-polyamine-organocation (APC) superfamily. Amino acid transporter (AAT) (TC 2.A.3.1) family.

The protein localises to the cell inner membrane. The protein is L-asparagine permease (ansP) of Salmonella typhimurium (strain LT2 / SGSC1412 / ATCC 700720).